The sequence spans 223 residues: Ribonuclease T (223 aa).

The Exonuclease domain maps to 20-194; that stretch reads VVIDVETAGF…YDTNQTALLF (175 aa). 4 residues coordinate Mg(2+): D23, E25, H181, and D186. H181 serves as the catalytic Proton donor/acceptor.

It belongs to the RNase T family. As to quaternary structure, homodimer. Requires Mg(2+) as cofactor.

Its function is as follows. Trims short 3' overhangs of a variety of RNA species, leaving a one or two nucleotide 3' overhang. Responsible for the end-turnover of tRNA: specifically removes the terminal AMP residue from uncharged tRNA (tRNA-C-C-A). Also appears to be involved in tRNA biosynthesis. The sequence is that of Ribonuclease T from Pectobacterium atrosepticum (strain SCRI 1043 / ATCC BAA-672) (Erwinia carotovora subsp. atroseptica).